A 663-amino-acid polypeptide reads, in one-letter code: MGLYRVRVSTGSSFYAGSQNQVQLWLVGQHGEAALGWCLRPARGKETEFSVDVSEYLGPLLFVKLRKRHLLQDDAWFCNWISVQGPGANGDEFRFPCYRWVEGDRILSLPEGTARTVVDDPQGLFKKHREEELAERRKLYRWGNWKDGLILNIASTGIHDLPVDERFLEDKRIDFEASLAKGLADLAVKDSLNVLMSWNSLDSFNRIFWCGQSKLAERVRDSWKEDALFGYQFLNGTNPMLLRHSVELPARLKFPPGMEELQAQLEKELQGGTLFEADFSLLDGIKANVILCSQQYLAVPLVMLKLQPDGKLLPMVIQLQLPHEGSPLPPLFLPTDPPMVWLLAKCWVRSSDFQLHELHSHLLRGHLMAEVIAVATMRCLPSIHPIFKLLIPHFRYTMEINVRARNGLVSDLGIFDQVVSTGGGGHVELLRRAAALLTYSSFCPPDDLADRGLLGVESSFYAQDALRLWEVISRYVEGIVSLHYKTDESVKEDLELQAWCREFTEIGLLGAQDRGFPVSLQSKEQLCHFVTMCIFTCTGQHSSNHLGQLDWYSWVPNAPCTMRLPPPTTKDATLETVMATLPNFHQASLQMSITWQLGRCQPTMVALGQHEEEYFSGPGPKAVLTKFREELAALDKDIEVRNAKLALPYEYLRPSRVENSVAI.

The region spanning Gly2–Arg115 is the PLAT domain. A Lipoxygenase domain is found at Thr116–Ile663. Fe cation is bound by residues His361, His366, His541, His545, and Ile663.

Belongs to the lipoxygenase family. In terms of assembly, interacts with PEBP1; in response to IL13/interleukin-13, prevents the interaction of PEBP1 with RAF1 to activate the ERK signaling cascade. The cofactor is Fe cation.

The protein resides in the cytoplasm. The protein localises to the cytosol. It is found in the cell membrane. Its subcellular location is the lipid droplet. The catalysed reaction is (5Z,8Z,11Z,14Z)-eicosatetraenoate + O2 = (12S)-hydroperoxy-(5Z,8Z,10E,14Z)-eicosatetraenoate. The enzyme catalyses (5Z,8Z,11Z,14Z)-eicosatetraenoate + O2 = (15S)-hydroperoxy-(5Z,8Z,11Z,13E)-eicosatetraenoate. It catalyses the reaction (9Z,12Z)-octadecadienoate + O2 = (13S)-hydroperoxy-(9Z,11E)-octadecadienoate. It carries out the reaction (5Z,8Z,11Z,14Z)-eicosatetraenoate + 2 O2 = (14R,15S)-dihydroperoxy-(5Z,8Z,10E,12E)-eicosatetraenoate. The catalysed reaction is (5Z,8Z,11Z,14Z)-eicosatetraenoate + 2 O2 = (8S,15S)-dihydroperoxy-(5Z,9E,11Z,13E)-eicosatetraenoate. The enzyme catalyses (14S,15R)-epoxy-(5Z,8Z,11Z)-eicosatrienoate + O2 = (8S)-hydroperoxy-(14S,15R)-epoxy-(5Z,9E,11Z)-eicosatrienoate. It catalyses the reaction (14S,15R)-epoxy-(5Z,8Z,11Z)-eicosatrienoate + O2 = (12S)-hydroperoxy-(14S,15R)-epoxy-(5Z,8Z,10E)-eicosatrienoate. It carries out the reaction (14R,15S)-epoxy-(5Z,8Z,11Z)-eicosatrienoate + O2 = (5S)-hydroperoxy-(14R,15S)-epoxy-(6E,8Z,11Z)-eicosatrienoate. The catalysed reaction is (14R,15S)-epoxy-(5Z,8Z,11Z)-eicosatrienoate + O2 = (12S)-hydroperoxy-(14R,15S)-epoxy-(5Z,8Z,10E)-eicosatrienoate. The enzyme catalyses (15R)-hydroperoxy-(5Z,8Z,11Z,13E)-eicosatetraenoate = 15-oxo-(5Z,8Z,11Z,13E)-eicosatetraenoate + H2O. It catalyses the reaction (15S)-hydroperoxy-(5Z,8Z,11Z,13E)-eicosatetraenoate = (14S,15S)-epoxy-(5Z,8Z,10E,12E)-eicosatetraenoate + H2O. It carries out the reaction (12S)-hydroperoxy-(5Z,8Z,10E,14Z)-eicosatetraenoate = (8S)-hydroxy-(11S,12S)-epoxy-(5Z,9E,14Z)-eicosatrienoate. The catalysed reaction is (4Z,7Z,10Z,13Z,16Z,19Z)-docosahexaenoate + O2 = 14-hydroperoxy-(4Z,7Z,10Z,12E,16Z,19Z)-docosahexaenoate. The enzyme catalyses (4Z,7Z,10Z,13Z,16Z)-docosapentaenoate + O2 = 14-hydroperoxy-(4Z,7Z,10Z,12E,16Z)-docosapentaenoate. It catalyses the reaction (7Z,10Z,13Z,16Z,19Z)-docosapentaenoate + O2 = 14-hydroperoxy-(7Z,10Z,12E,16Z,19Z)-docosapentaenoate. It carries out the reaction (4Z,7Z,10Z,13Z,16Z,19Z)-docosahexaenoate + O2 = (14S)-hydroperoxy-(4Z,7Z,10Z,12E,16Z,19Z)-docosahexaenoate. The catalysed reaction is (4Z,7Z,10Z,13Z,16Z,19Z)-docosahexaenoate + O2 = (17S)-hydroperoxy-(4Z,7Z,10Z,13Z,15E,19Z)-docosahexaenoate. The enzyme catalyses (7S)-hydroperoxy-(4Z,8E,10Z,13Z,16Z,19Z)-docosahexaenoate + O2 = (7S,14S)-dihydroperoxy-(4Z,8E,10Z,12E,16Z,19Z)-docosahexaenoate. It catalyses the reaction (7S)-hydroperoxy-(4Z,8E,10Z,13Z,16Z,19Z)-docosahexaenoate + O2 = (7S,17S)-dihydroperoxy-(4Z,8E,10Z,13Z,15E,19Z)-docosahexaenoate. It carries out the reaction (4Z,7Z,10Z,13Z,16Z,19Z)-docosahexaenoate + O2 = (11S)-hydroperoxy-(4Z,7Z,9E,13Z,16Z,19Z)-docosahexaenoate. The catalysed reaction is N-(5Z,8Z,11Z,14Z)-eicosatetraenoyl-taurine + O2 = N-(12S)-hydroperoxy-(5Z,8Z,10E,14Z)-eicosatetraenoyl-taurine. The enzyme catalyses N-(5Z,8Z,11Z,14Z)-eicosatetraenoyl-gamma-aminobutanoate + O2 = N-(12S)-hydroperoxy-(5Z,8Z,10E,14Z)-eicosatetraenoyl-gamma-aminobutanoate. It catalyses the reaction N-(5Z,8Z,11Z,14Z)-eicosatetraenoyl-glycine + O2 = N-(12S)-hydroperoxy-(5Z,8Z,10E,14Z)-eicosatetraenoyl-glycine. It carries out the reaction N-(5Z,8Z,11Z,14Z)-eicosatetraenoyl-L-alanine + O2 = N-(12S)-hydroperoxy-(5Z,8Z,10E,14Z)-eicosatetraenoyl-alanine. The catalysed reaction is N-(5Z,8Z,11Z,14Z)-eicosatetraenoyl-taurine + O2 = N-(15S)-hydroperoxy-(5Z,8Z,11Z,13E)-eicosatetraenoyl-taurine. The enzyme catalyses N-(5Z,8Z,11Z,14Z)-eicosatetraenoyl-gamma-aminobutanoate + O2 = N-(15S)-hydroperoxy-(5Z,8Z,11Z,13E)-eicosatetraenoyl-gamma-aminobutanoate. It catalyses the reaction N-(5Z,8Z,11Z,14Z)-eicosatetraenoyl-glycine + O2 = N-(15S)-hydroperoxy-(5Z,8Z,11Z,13E)-eicosatetraenoyl-glycine. It carries out the reaction N-(5Z,8Z,11Z,14Z)-eicosatetraenoyl-L-alanine + O2 = N-(15S)-hydroperoxy-(5Z,8Z,11Z,13E)-eicosatetraenoyl-alanine. It participates in lipid metabolism; hydroperoxy eicosatetraenoic acid biosynthesis. Functionally, non-heme iron-containing dioxygenase that catalyzes the stereo-specific peroxidation of free and esterified polyunsaturated fatty acids generating a spectrum of bioactive lipid mediators. It inserts peroxyl groups at C12 or C15 of arachidonate ((5Z,8Z,11Z,14Z)-eicosatetraenoate) producing both 12-hydroperoxyeicosatetraenoate/12-HPETE and 15-hydroperoxyeicosatetraenoate/15-HPETE. It may then act on 12-HPETE to produce hepoxilins, which may show pro-inflammatory properties. Can also peroxidize linoleate ((9Z,12Z)-octadecadienoate) to 13-hydroperoxyoctadecadienoate. May participate in the sequential oxidations of DHA ((4Z,7Z,10Z,13Z,16Z,19Z)-docosahexaenoate) to generate specialized pro-resolving mediators (SPMs)like resolvin D5 ((7S,17S)-diHPDHA) and (7S,14S)-diHPDHA, that actively down-regulate the immune response and have anti-aggregation properties with platelets. Can convert epoxy fatty acids to hydroperoxy-epoxides derivatives followed by an intramolecular nucleophilic substitution leading to the formation of monocyclic endoperoxides. Plays an important role during the maintenance of self-tolerance by peroxidizing membrane-bound phosphatidylethanolamine which can then signal the sorting process for clearance of apoptotic cells during inflammation and prevent an autoimmune response. In addition to its role in the immune and inflammatory responses, this enzyme may play a role in epithelial wound healing in the cornea through production of lipoxin A4 (LXA(4)) and docosahexaenoic acid-derived neuroprotectin D1 (NPD1; 10R,17S-HDHA), both lipid autacoids exhibit anti-inflammatory and neuroprotective properties. Furthermore, it may regulate actin polymerization which is crucial for several biological processes such as the phagocytosis of apoptotic cells. It is also implicated in the generation of endogenous ligands for peroxisome proliferator activated receptor (PPAR-gamma), hence modulating macrophage development and function. It may also exert a negative effect on skeletal development by regulating bone mass through this pathway. As well as participates in ER stress and downstream inflammation in adipocytes, pancreatic islets, and liver. Finally, it is also involved in the cellular response to IL13/interleukin-13. This chain is Polyunsaturated fatty acid lipoxygenase ALOX15, found in Sus scrofa (Pig).